The chain runs to 288 residues: Eukaryotic translation initiation factor 3 subunit F-2 (288 aa).

The MPN domain maps to 12 to 149 (VLLHPLVLFQ…TRIFCAVATG (138 aa)).

It belongs to the eIF-3 subunit F family. In terms of assembly, component of the eukaryotic translation initiation factor 3 (eIF-3) complex. The eIF-3 complex interacts with pix.

It localises to the cytoplasm. Component of the eukaryotic translation initiation factor 3 (eIF-3) complex, which is involved in protein synthesis of a specialized repertoire of mRNAs and, together with other initiation factors, stimulates binding of mRNA and methionyl-tRNAi to the 40S ribosome. The eIF-3 complex specifically targets and initiates translation of a subset of mRNAs involved in cell proliferation. This is Eukaryotic translation initiation factor 3 subunit F-2 from Drosophila pseudoobscura pseudoobscura (Fruit fly).